We begin with the raw amino-acid sequence, 300 residues long: Acetylglutamate kinase (300 aa).

Substrate contacts are provided by residues 73–74 (GG), Arg95, and Asn197.

This sequence belongs to the acetylglutamate kinase family. ArgB subfamily.

Its subcellular location is the cytoplasm. It carries out the reaction N-acetyl-L-glutamate + ATP = N-acetyl-L-glutamyl 5-phosphate + ADP. It participates in amino-acid biosynthesis; L-arginine biosynthesis; N(2)-acetyl-L-ornithine from L-glutamate: step 2/4. Catalyzes the ATP-dependent phosphorylation of N-acetyl-L-glutamate. This chain is Acetylglutamate kinase, found in Polynucleobacter asymbioticus (strain DSM 18221 / CIP 109841 / QLW-P1DMWA-1) (Polynucleobacter necessarius subsp. asymbioticus).